Reading from the N-terminus, the 574-residue chain is Putative DNA-directed RNA polymerase subunit alpha-like 1 (574 aa).

Positions Met1 to Ser352 are alpha N-terminal domain (alpha-NTD). Residues Pro419–Phe574 form an alpha C-terminal domain (alpha-CTD) region. The segment at Gln534–Phe574 is disordered. A compositionally biased stretch (basic and acidic residues) spans Asp551 to Phe574.

Belongs to the RNA polymerase alpha chain family. In terms of assembly, in plastids the minimal PEP RNA polymerase catalytic core is composed of four subunits: alpha, beta, beta', and beta''. When a (nuclear-encoded) sigma factor is associated with the core the holoenzyme is formed, which can initiate transcription.

Its subcellular location is the plastid. The protein localises to the chloroplast. The catalysed reaction is RNA(n) + a ribonucleoside 5'-triphosphate = RNA(n+1) + diphosphate. In terms of biological role, DNA-dependent RNA polymerase catalyzes the transcription of DNA into RNA using the four ribonucleoside triphosphates as substrates. The chain is Putative DNA-directed RNA polymerase subunit alpha-like 1 (rpoAL1-A) from Pelargonium hortorum (Common geranium).